The following is a 572-amino-acid chain: Proline--tRNA ligase (572 aa).

Belongs to the class-II aminoacyl-tRNA synthetase family. ProS type 1 subfamily. In terms of assembly, homodimer.

Its subcellular location is the cytoplasm. The enzyme catalyses tRNA(Pro) + L-proline + ATP = L-prolyl-tRNA(Pro) + AMP + diphosphate. Its function is as follows. Catalyzes the attachment of proline to tRNA(Pro) in a two-step reaction: proline is first activated by ATP to form Pro-AMP and then transferred to the acceptor end of tRNA(Pro). As ProRS can inadvertently accommodate and process non-cognate amino acids such as alanine and cysteine, to avoid such errors it has two additional distinct editing activities against alanine. One activity is designated as 'pretransfer' editing and involves the tRNA(Pro)-independent hydrolysis of activated Ala-AMP. The other activity is designated 'posttransfer' editing and involves deacylation of mischarged Ala-tRNA(Pro). The misacylated Cys-tRNA(Pro) is not edited by ProRS. The polypeptide is Proline--tRNA ligase (Leuconostoc mesenteroides subsp. mesenteroides (strain ATCC 8293 / DSM 20343 / BCRC 11652 / CCM 1803 / JCM 6124 / NCDO 523 / NBRC 100496 / NCIMB 8023 / NCTC 12954 / NRRL B-1118 / 37Y)).